The chain runs to 238 residues: Opacity protein opA60 (238 aa).

Residue Ala-1 is a signal peptide.

This sequence belongs to the opacity porin family.

The protein localises to the cell outer membrane. In terms of biological role, implicated in a number of adherence functions. OPA proteins are implicated in pathogenesis and are subject to phase variation. The chain is Opacity protein opA60 (opaH) from Neisseria gonorrhoeae.